A 766-amino-acid polypeptide reads, in one-letter code: Protein zer-1 homolog (766 aa).

At A2 the chain carries N-acetylalanine. LRR repeat units lie at residues 226–245 (SLVL…IVQL), 246–268 (HKLR…KLTR), and 278–302 (LGNL…KMEE). 5 ARM repeats span residues 427-467 (RSEQ…NFSI), 511-556 (DNDH…NITD), 558-600 (TPDN…NVAE), 602-643 (KELR…HIMF), and 714-756 (PDKY…HCSN).

The protein belongs to the zyg-11 family. Interacts with the ELOC-ELOB/Elongin BC complex. Part of an E3 ubiquitin ligase complex including ZER1, CUL2 and Elongin BC. Expressed in testis, spermatocytes and spermatids (at protein level). Expressed in spermatocytes, spermatids, prostate, skeletal muscle, ovary, small intestine, heart, brain and pancreas.

In terms of biological role, serves as substrate adapter subunit in the E3 ubiquitin ligase complex ZYG11B-CUL2-Elongin BC. Acts to target substrates bearing N-terminal degrons for proteasomal degradation with the first four residues of substrates being the key recognition elements. Involved in the clearance of proteolytic fragments generated by caspase cleavage during apoptosis since N-terminal glycine degrons are strongly enriched at caspase cleavage sites. Also important in the quality control of protein N-myristoylation in which N-terminal glycine degrons are conditionally exposed after a failure of N-myristoylation. This is Protein zer-1 homolog from Homo sapiens (Human).